Here is a 404-residue protein sequence, read N- to C-terminus: MQYSEIMIRYGELSTKGKNRMRFINKLRNNISDVLSIYPQVKVTADRDRAHAYLNGADYTAVAESLKQVFGIQNFSPVYKVEKSVEVLKSAVQEIMQDIYKEGMTFKISSKRSDHTFELDSRELNQTLGGAVFEAIPNVQAQMKSPDINLQVEIREEAAYLSYETVRGAGGLPVGTSGKGMLMLSGGIDSPVAGYLALKRGVDIEAVHFASPPYTSPGALKKAQDLTRKLTKFGGNIQFIEVPFTEIQEEIKAKAPEAYLMTLTRRFMMRITDRIREVRNGLVIINGESLGQVASQTLESMKAINAVTNTPIIRPVVTMDKLEIIDIAQEIDTFDISIQPFEDCCTIFAPDRPKTNPKIKNAEQYEARMDVEGLVERAVAGIMITEITPQAEKDEVDDLIDNLL.

One can recognise a THUMP domain in the interval threonine 60–threonine 165. ATP contacts are provided by residues methionine 183 to leucine 184, histidine 208 to phenylalanine 209, arginine 265, glycine 287, and glutamine 296.

The protein belongs to the ThiI family.

It is found in the cytoplasm. It catalyses the reaction [ThiI sulfur-carrier protein]-S-sulfanyl-L-cysteine + a uridine in tRNA + 2 reduced [2Fe-2S]-[ferredoxin] + ATP + H(+) = [ThiI sulfur-carrier protein]-L-cysteine + a 4-thiouridine in tRNA + 2 oxidized [2Fe-2S]-[ferredoxin] + AMP + diphosphate. It carries out the reaction [ThiS sulfur-carrier protein]-C-terminal Gly-Gly-AMP + S-sulfanyl-L-cysteinyl-[cysteine desulfurase] + AH2 = [ThiS sulfur-carrier protein]-C-terminal-Gly-aminoethanethioate + L-cysteinyl-[cysteine desulfurase] + A + AMP + 2 H(+). It participates in cofactor biosynthesis; thiamine diphosphate biosynthesis. Functionally, catalyzes the ATP-dependent transfer of a sulfur to tRNA to produce 4-thiouridine in position 8 of tRNAs, which functions as a near-UV photosensor. Also catalyzes the transfer of sulfur to the sulfur carrier protein ThiS, forming ThiS-thiocarboxylate. This is a step in the synthesis of thiazole, in the thiamine biosynthesis pathway. The sulfur is donated as persulfide by IscS. This Streptococcus pneumoniae (strain ATCC 700669 / Spain 23F-1) protein is Probable tRNA sulfurtransferase.